We begin with the raw amino-acid sequence, 317 residues long: UV DNA damage endonuclease (317 aa).

This sequence belongs to the uve1/UvsE family.

Functionally, component in a DNA repair pathway. Removal of UV LIGHT damaged nucleotides. Recognizes pyrimidine dimers and cleave a phosphodiester bond immediately 5' to the lesion. The protein is UV DNA damage endonuclease of Bacillus anthracis (strain A0248).